The primary structure comprises 158 residues: SsrA-binding protein (158 aa).

The protein belongs to the SmpB family.

Its subcellular location is the cytoplasm. Functionally, required for rescue of stalled ribosomes mediated by trans-translation. Binds to transfer-messenger RNA (tmRNA), required for stable association of tmRNA with ribosomes. tmRNA and SmpB together mimic tRNA shape, replacing the anticodon stem-loop with SmpB. tmRNA is encoded by the ssrA gene; the 2 termini fold to resemble tRNA(Ala) and it encodes a 'tag peptide', a short internal open reading frame. During trans-translation Ala-aminoacylated tmRNA acts like a tRNA, entering the A-site of stalled ribosomes, displacing the stalled mRNA. The ribosome then switches to translate the ORF on the tmRNA; the nascent peptide is terminated with the 'tag peptide' encoded by the tmRNA and targeted for degradation. The ribosome is freed to recommence translation, which seems to be the essential function of trans-translation. In Pseudoalteromonas atlantica (strain T6c / ATCC BAA-1087), this protein is SsrA-binding protein.